The following is an 890-amino-acid chain: Translation initiation factor IF-2 (890 aa).

The segment at 45-304 (LIDHLNQKNS…LQQGFQKPAQ (260 aa)) is disordered. Residues 67 to 81 (STLNIPGTGGKSKSV) are compositionally biased toward polar residues. Positions 92–217 (VKRDPQEAER…RMAEENKWTD (126 aa)) are enriched in basic and acidic residues. Residues 252-266 (GRGRNAKAARPKKGN) show a composition bias toward basic residues. A compositionally biased stretch (basic and acidic residues) spans 267-280 (KHSESKADREEARA). Residues 389 to 558 (PRAPVVTIMG…LLQAEVLELK (170 aa)) form the tr-type G domain. Positions 398-405 (GHVDHGKT) are G1. Residue 398-405 (GHVDHGKT) participates in GTP binding. A G2 region spans residues 423–427 (GITQH). Positions 444 to 447 (DTPG) are G3. GTP is bound by residues 444–448 (DTPGH) and 498–501 (NKID). The G4 stretch occupies residues 498-501 (NKID). The G5 stretch occupies residues 534–536 (SAK). Lys808 carries the N6-acetyllysine modification.

Belongs to the TRAFAC class translation factor GTPase superfamily. Classic translation factor GTPase family. IF-2 subfamily.

Its subcellular location is the cytoplasm. In terms of biological role, one of the essential components for the initiation of protein synthesis. Protects formylmethionyl-tRNA from spontaneous hydrolysis and promotes its binding to the 30S ribosomal subunits. Also involved in the hydrolysis of GTP during the formation of the 70S ribosomal complex. The sequence is that of Translation initiation factor IF-2 from Escherichia fergusonii (strain ATCC 35469 / DSM 13698 / CCUG 18766 / IAM 14443 / JCM 21226 / LMG 7866 / NBRC 102419 / NCTC 12128 / CDC 0568-73).